We begin with the raw amino-acid sequence, 890 residues long: Leucine--tRNA ligase (890 aa).

Residues 48–58 carry the 'HIGH' region motif; the sequence is PYPSGKLHMGH. The short motif at 645-649 is the 'KMSKS' region element; sequence KMSKS. Position 648 (K648) interacts with ATP.

This sequence belongs to the class-I aminoacyl-tRNA synthetase family.

Its subcellular location is the cytoplasm. The catalysed reaction is tRNA(Leu) + L-leucine + ATP = L-leucyl-tRNA(Leu) + AMP + diphosphate. This chain is Leucine--tRNA ligase, found in Polynucleobacter asymbioticus (strain DSM 18221 / CIP 109841 / QLW-P1DMWA-1) (Polynucleobacter necessarius subsp. asymbioticus).